We begin with the raw amino-acid sequence, 411 residues long: MTQRIAVLGATGSIGDSTLSILAAHPEHYQVYALSGHGRLDKLFELCQQFRPSRVAVPENKVDDFATRLAAAQIACEVVGGQAGLDDIALDPQVDTVVAAIVGAAGLASTLSAAKAGKRVLLANKEALVMAGSLMMQAVRDNGATLLPLDSEHNAIFQCLPPQIQQNNTAIHDASHGVKKLWLTASGGPFLNKTWEQMQAASVSEAVKHPNWSMGQKISVDSATMMNKGLELIEACHLFDLAESQINVVIHPQSIIHSLVEYCDGSFLAQMGSPDMRTPIAHALAYPNRISAGVESLDLYQLSSLEFIKPDLKKFACLKLAREAMQSGQAASITLNAANEVAVEAFIKQQVSLTDIALINAQVLDKMLGKDKSVAGHAAISVRQITELNDILMIDKIAREQAQLEVMACRN.

Residues T11, G12, S13, I14, and N124 each contribute to the NADPH site. 1-deoxy-D-xylulose 5-phosphate is bound at residue K125. Residue E126 participates in NADPH binding. D150 lines the Mn(2+) pocket. 1-deoxy-D-xylulose 5-phosphate contacts are provided by S151, E152, S186, and H209. E152 contacts Mn(2+). NADPH is bound at residue G215. Residues S222, N227, K228, and E231 each coordinate 1-deoxy-D-xylulose 5-phosphate. E231 is a Mn(2+) binding site.

It belongs to the DXR family. Mg(2+) serves as cofactor. It depends on Mn(2+) as a cofactor.

It catalyses the reaction 2-C-methyl-D-erythritol 4-phosphate + NADP(+) = 1-deoxy-D-xylulose 5-phosphate + NADPH + H(+). It functions in the pathway isoprenoid biosynthesis; isopentenyl diphosphate biosynthesis via DXP pathway; isopentenyl diphosphate from 1-deoxy-D-xylulose 5-phosphate: step 1/6. Functionally, catalyzes the NADPH-dependent rearrangement and reduction of 1-deoxy-D-xylulose-5-phosphate (DXP) to 2-C-methyl-D-erythritol 4-phosphate (MEP). This chain is 1-deoxy-D-xylulose 5-phosphate reductoisomerase, found in Psychrobacter sp. (strain PRwf-1).